Reading from the N-terminus, the 79-residue chain is Acyl carrier protein (79 aa).

Residues 2–77 (ADHASKIKDI…DAVAYLEAKV (76 aa)) enclose the Carrier domain. At S37 the chain carries O-(pantetheine 4'-phosphoryl)serine.

It belongs to the acyl carrier protein (ACP) family. 4'-phosphopantetheine is transferred from CoA to a specific serine of apo-ACP by AcpS. This modification is essential for activity because fatty acids are bound in thioester linkage to the sulfhydryl of the prosthetic group.

Its subcellular location is the cytoplasm. Its pathway is lipid metabolism; fatty acid biosynthesis. Carrier of the growing fatty acid chain in fatty acid biosynthesis. This Gemmatimonas aurantiaca (strain DSM 14586 / JCM 11422 / NBRC 100505 / T-27) protein is Acyl carrier protein.